A 414-amino-acid chain; its full sequence is S-adenosylmethionine synthase (414 aa).

His11 contacts ATP. Asp13 lines the Mg(2+) pocket. Position 39 (Glu39) interacts with K(+). Glu52 and Gln95 together coordinate L-methionine. Positions 95–105 (QSPDIAQGVNL) are flexible loop. Residues 169–171 (DGK), 245–246 (KF), Asp254, 260–261 (RK), Ala277, and Lys281 each bind ATP. Asp254 is an L-methionine binding site. L-methionine is bound at residue Lys285.

The protein belongs to the AdoMet synthase family. Homotetramer; dimer of dimers. Mg(2+) serves as cofactor. Requires K(+) as cofactor.

It localises to the cytoplasm. It carries out the reaction L-methionine + ATP + H2O = S-adenosyl-L-methionine + phosphate + diphosphate. It participates in amino-acid biosynthesis; S-adenosyl-L-methionine biosynthesis; S-adenosyl-L-methionine from L-methionine: step 1/1. Its function is as follows. Catalyzes the formation of S-adenosylmethionine (AdoMet) from methionine and ATP. The overall synthetic reaction is composed of two sequential steps, AdoMet formation and the subsequent tripolyphosphate hydrolysis which occurs prior to release of AdoMet from the enzyme. The sequence is that of S-adenosylmethionine synthase from Synechococcus sp. (strain JA-3-3Ab) (Cyanobacteria bacterium Yellowstone A-Prime).